A 229-amino-acid polypeptide reads, in one-letter code: MSEKENNFPPLPKFIPVKPCFYQNFSDEIPVEHQVLVKRIYRLWMFYCATLGVNLIACLAWWIGGGSGTNFGLAFVWLLLFTPCSYVCWFRPVYKAFRADSSFNFMAFFFIFGAQFVLTVIQAIGFSGWGACGWLSAIGFFQYSPGAAVVMLLPAIMFSVSAAMMAIAIMKVHRIYRGAGGSFQKAQTEWNTGTWRNPPSREAQYNNFSGNSLPEYPTVPSYPGSGQWP.

The Cytoplasmic segment spans residues 1–39; it reads MSEKENNFPPLPKFIPVKPCFYQNFSDEIPVEHQVLVKR. 4 helical membrane-spanning segments follow: residues 40-60, 61-81, 105-125, and 149-169; these read IYRLWMFYCATLGVNLIACLA, WWIGGGSGTNFGLAFVWLLLF, FMAFFFIFGAQFVLTVIQAIG, and VVMLLPAIMFSVSAAMMAIAI. Topologically, residues 170-229 are cytoplasmic; that stretch reads MKVHRIYRGAGGSFQKAQTEWNTGTWRNPPSREAQYNNFSGNSLPEYPTVPSYPGSGQWP. A Phosphothreonine modification is found at T194. A disordered region spans residues 208-229; sequence FSGNSLPEYPTVPSYPGSGQWP.

The protein belongs to the SCAMP family.

It localises to the membrane. In terms of biological role, probably involved in membrane protein trafficking. This chain is Secretory carrier-associated membrane protein 4 (SCAMP4), found in Pongo abelii (Sumatran orangutan).